The chain runs to 356 residues: uncharacterized protein (356 aa).

The N-terminal stretch at Met1–Cys21 is a signal peptide. The disordered stretch occupies residues Arg293–Val317.

This is an uncharacterized protein from Acanthamoeba polyphaga mimivirus (APMV).